Consider the following 24-residue polypeptide: U1-poneritoxin-Na1a (24 aa).

This sequence belongs to the non-disulfide-bridged peptide (NDBP) superfamily. Medium-length antimicrobial peptide (group 3) family. Ponericin-W subfamily. Expressed by the venom gland.

The protein resides in the secreted. It is found in the target cell membrane. Has a broad spectrum of activity against both Gram-positive and Gram-negative bacteria and S.cerevisiae. Has insecticidal and hemolytic activities. May act by disrupting the integrity of the bacterial cell membrane. The polypeptide is U1-poneritoxin-Na1a (Neoponera apicalis (Ant)).